We begin with the raw amino-acid sequence, 158 residues long: Transcriptional regulatory protein DoeX (158 aa).

The region spanning 3-64 (LDRYDLKILE…RLNTDVLVKR (62 aa)) is the HTH asnC-type domain. Positions 22 to 41 (KSKLAEAINLSVSPCWERVR) form a DNA-binding region, H-T-H motif.

It is found in the cytoplasm. Functionally, acts as a transcriptional regulator. It binds DNA specifically to a fragment from the doeA promoter region. In Halomonas elongata (strain ATCC 33173 / DSM 2581 / NBRC 15536 / NCIMB 2198 / 1H9), this protein is Transcriptional regulatory protein DoeX (doeX).